A 108-amino-acid polypeptide reads, in one-letter code: PTS system fructose-like EIIB component 1 (108 aa).

The region spanning 1 to 104 is the PTS EIIB type-2 domain; the sequence is MSKKLIALCA…IIKEIEEMIA (104 aa). Cys-11 acts as the Phosphocysteine intermediate in catalysis. Phosphocysteine; by EIIA is present on Cys-11.

The protein resides in the cytoplasm. It carries out the reaction D-fructose(out) + N(pros)-phospho-L-histidyl-[protein] = D-fructose 1-phosphate(in) + L-histidyl-[protein]. Its function is as follows. The phosphoenolpyruvate-dependent sugar phosphotransferase system (sugar PTS), a major carbohydrate active transport system, catalyzes the phosphorylation of incoming sugar substrates concomitantly with their translocation across the cell membrane. The enzyme II FryABC PTS system is involved in fructose transport. The sequence is that of PTS system fructose-like EIIB component 1 (fryB) from Escherichia coli O157:H7.